Here is a 203-residue protein sequence, read N- to C-terminus: Pyridoxine/pyridoxamine 5'-phosphate oxidase (203 aa).

FMN is bound by residues 51-56 (RMVLLK), 66-67 (YT), arginine 72, lysine 73, and glutamine 95. Lysine 56 is a substrate binding site. Positions 113, 117, and 121 each coordinate substrate. FMN is bound by residues 130 to 131 (QS) and tryptophan 175. Residue 181–183 (RLH) coordinates substrate. Arginine 185 provides a ligand contact to FMN.

It belongs to the pyridoxamine 5'-phosphate oxidase family. In terms of assembly, homodimer. The cofactor is FMN.

It catalyses the reaction pyridoxamine 5'-phosphate + O2 + H2O = pyridoxal 5'-phosphate + H2O2 + NH4(+). It carries out the reaction pyridoxine 5'-phosphate + O2 = pyridoxal 5'-phosphate + H2O2. It participates in cofactor metabolism; pyridoxal 5'-phosphate salvage; pyridoxal 5'-phosphate from pyridoxamine 5'-phosphate: step 1/1. It functions in the pathway cofactor metabolism; pyridoxal 5'-phosphate salvage; pyridoxal 5'-phosphate from pyridoxine 5'-phosphate: step 1/1. Catalyzes the oxidation of either pyridoxine 5'-phosphate (PNP) or pyridoxamine 5'-phosphate (PMP) into pyridoxal 5'-phosphate (PLP). The sequence is that of Pyridoxine/pyridoxamine 5'-phosphate oxidase from Novosphingobium aromaticivorans (strain ATCC 700278 / DSM 12444 / CCUG 56034 / CIP 105152 / NBRC 16084 / F199).